A 299-amino-acid polypeptide reads, in one-letter code: Sulfate adenylyltransferase subunit 2 (299 aa).

Residues 276 to 299 (EREGRVIDHDSAGSMEKKKREGYF) form a disordered region.

Belongs to the PAPS reductase family. CysD subfamily. As to quaternary structure, heterodimer composed of CysD, the smaller subunit, and CysN.

It carries out the reaction sulfate + ATP + H(+) = adenosine 5'-phosphosulfate + diphosphate. It participates in sulfur metabolism; hydrogen sulfide biosynthesis; sulfite from sulfate: step 1/3. Functionally, with CysN forms the ATP sulfurylase (ATPS) that catalyzes the adenylation of sulfate producing adenosine 5'-phosphosulfate (APS) and diphosphate, the first enzymatic step in sulfur assimilation pathway. APS synthesis involves the formation of a high-energy phosphoric-sulfuric acid anhydride bond driven by GTP hydrolysis by CysN coupled to ATP hydrolysis by CysD. The sequence is that of Sulfate adenylyltransferase subunit 2 from Pseudoalteromonas translucida (strain TAC 125).